Reading from the N-terminus, the 293-residue chain is MNFQSVIAKLHEFWSDRGCLIVQPYDIEKGAGTKSPHTFLRSLGPEPWAVAYVEPCRRPADGRYGENPNRYQYYYQYQVLVKPSPDDIQDIYLDSLRVLGIQPEDHDIRFVEDNWEDAAVGAWGVGWEVWLDGMEVTQFTYFQQCGGLDCRPVSIELTYGLERLTMYLQETDAIAKIDWNGTLTYGDVHLQGEIEQSTYNFEASNPELLFQLFSLYEQEALQLIEKQLVLPGLDYVLKCSHTFNLLDARGVISVTERTRYIGRIRQMARQVAQLYLQQREELGFPLLKTQSVS.

Belongs to the class-II aminoacyl-tRNA synthetase family. Tetramer of two alpha and two beta subunits.

The protein resides in the cytoplasm. It carries out the reaction tRNA(Gly) + glycine + ATP = glycyl-tRNA(Gly) + AMP + diphosphate. The protein is Glycine--tRNA ligase alpha subunit of Acaryochloris marina (strain MBIC 11017).